The sequence spans 751 residues: MTISPPEREAKKVKIVVDRNPVVTSFEKWAKPGHFSRTLAKGPTTTTWIWDLHADAHDFDSHTTDLEDISPKIFSAHFGQLGVILIWLSGMYFHGARFSNYEAWLSDPTHIKPSAQVVWPIVGQEILNGDVGGGFQGIQITSGFFQLWRASGITSELQLYSTAIGGLLLAAAMFFAGWFHYHKAAPKLEWFQNVESMMNHHLGGLLGLGSLGWAGHQIHVSLPVNKLLNAGVDPKEIPLPHEFLLNRDLMAQLYPSFAKGLTPFFTLNWAEYGDFLTFRGGLNPVTGGLWLSDTAHHHVAIAVLFLVAGHMYRTNWGIGHSMKEILEAHKGPFTGEGHKGLYEILTTSWHAQLAINLALFGSLSIVVAHHMYAMPPYPYLATDYGTQLSLFTHHMWIGGFCVVGAAAHAAIFMVRDYDPTNNYNNLLDRVIRHRDAIISHLNWVCIFLGFHSFGLYIHNDTMSALGRPQDMFSDTAIQLQPVFAQWIHKTHALAPGLTAPNALASTSPSWGGDVVAVGGKVAMMPISLGTADFLVHHIHAFTIHVTVLILLKGVLFARSSRLIPDKANLGFRFPCDGPGRGGTCQVSAWDHVFLGLFWMYNSISVVIFHFSWKMQSDVWGNVTAQGVSHITGGNFALSSNTINGWLRDFLWAQASQVIQSYGSALSAYGLIFLGAHFIWAFSLMFLFSGRGYWQELIESIVWAHNKLKVAPSIQPRALSITQGRAVGVAHYLLGGIATTWAFFLARIIAVG.

8 consecutive transmembrane segments (helical) span residues 73–96 (IFSAHFGQLGVILIWLSGMYFHGA), 159–182 (LYSTAIGGLLLAAAMFFAGWFHYH), 198–222 (MNHHLGGLLGLGSLGWAGHQIHVSL), 294–312 (TAHHHVAIAVLFLVAGHMY), 349–372 (WHAQLAINLALFGSLSIVVAHHMY), 388–414 (LSLFTHHMWIGGFCVVGAAAHAAIFMV), 436–458 (AIISHLNWVCIFLGFHSFGLYIH), and 533–551 (FLVHHIHAFTIHVTVLILL). [4Fe-4S] cluster contacts are provided by Cys575 and Cys584. A run of 2 helical transmembrane segments spans residues 591-612 (HVFLGLFWMYNSISVVIFHFSW) and 665-687 (LSAYGLIFLGAHFIWAFSLMFLF). His676 contacts chlorophyll a'. Met684 and Tyr692 together coordinate chlorophyll a. Trp693 lines the phylloquinone pocket. The chain crosses the membrane as a helical span at residues 725-745 (AVGVAHYLLGGIATTWAFFLA).

Belongs to the PsaA/PsaB family. As to quaternary structure, the PsaA/B heterodimer binds the P700 chlorophyll special pair and subsequent electron acceptors. PSI consists of a core antenna complex that captures photons, and an electron transfer chain that converts photonic excitation into a charge separation. The eukaryotic PSI reaction center is composed of at least 11 subunits. P700 is a chlorophyll a/chlorophyll a' dimer, A0 is one or more chlorophyll a, A1 is one or both phylloquinones and FX is a shared 4Fe-4S iron-sulfur center. is required as a cofactor.

It is found in the plastid. It localises to the chloroplast thylakoid membrane. The catalysed reaction is reduced [plastocyanin] + hnu + oxidized [2Fe-2S]-[ferredoxin] = oxidized [plastocyanin] + reduced [2Fe-2S]-[ferredoxin]. PsaA and PsaB bind P700, the primary electron donor of photosystem I (PSI), as well as the electron acceptors A0, A1 and FX. PSI is a plastocyanin/cytochrome c6-ferredoxin oxidoreductase, converting photonic excitation into a charge separation, which transfers an electron from the donor P700 chlorophyll pair to the spectroscopically characterized acceptors A0, A1, FX, FA and FB in turn. Oxidized P700 is reduced on the lumenal side of the thylakoid membrane by plastocyanin or cytochrome c6. The polypeptide is Photosystem I P700 chlorophyll a apoprotein A1 (Nephroselmis olivacea (Green alga)).